The primary structure comprises 204 residues: Ribosome maturation factor RimM (204 aa).

The PRC barrel domain maps to 117–192; that stretch reads DEDEFFSADL…EVTIDPPDDL (76 aa).

This sequence belongs to the RimM family. As to quaternary structure, binds ribosomal protein uS19.

It is found in the cytoplasm. An accessory protein needed during the final step in the assembly of 30S ribosomal subunit, possibly for assembly of the head region. Essential for efficient processing of 16S rRNA. May be needed both before and after RbfA during the maturation of 16S rRNA. It has affinity for free ribosomal 30S subunits but not for 70S ribosomes. This chain is Ribosome maturation factor RimM, found in Methylobacterium nodulans (strain LMG 21967 / CNCM I-2342 / ORS 2060).